A 493-amino-acid chain; its full sequence is MKKLLPILIGLSLSGFSSLSQAENLMQVYQQARLSNPELRKSAADRDAAFEKINEARSPLLPQLGLGADYTYSNGYRDANGINSNATSASLQLTQSIFDMSKWRALTLQEKAAGIQDVTYQTDQQTLILNTATAYFNVLNAIDVLSYTQAQKEAIYRQLDQTTQRFNVGLVAITDVQNARAQYDTVLANEVTARNNLDNAVEQLRQITGNYYPELAALNVENFKTDKPQPVNALLKEAEKRNLSLLQARLSQDLAREQIRQAQDGHLPTLDLTASTGISDTSYSGSKTRGAAGTQYDDSNMGQNKVGLSFSLPIYQGGMVNSQVKQAQYNFVGASEQLESAHRSVVQTVRSSFNNINASISSINAYKQAVVSAQSSLDAMEAGYSVGTRTIVDVLDATTTLYNAKQELANARYNYLINQLNIKSALGTLNEQDLLALNNALSKPVSTNPENVAPQTPEQNAIADGYAPDSPAPVVQQTSARTTTSNGHNPFRN.

Positions 1–22 are cleaved as a signal peptide; it reads MKKLLPILIGLSLSGFSSLSQA. The Periplasmic portion of the chain corresponds to 23 to 62; the sequence is ENLMQVYQQARLSNPELRKSAADRDAAFEKINEARSPLLP. Repeat copies occupy residues 23–230 and 231–446. The chain crosses the membrane as a beta stranded span at residues 63–74; that stretch reads QLGLGADYTYSN. Over 75–82 the chain is Extracellular; it reads GYRDANGI. Residues 83–96 form a beta stranded membrane-spanning segment; it reads NSNATSASLQLTQS. At 97–268 the chain is on the periplasmic side; sequence IFDMSKWRAL…IRQAQDGHLP (172 aa). The chain crosses the membrane as a beta stranded span at residues 269–279; it reads TLDLTASTGIS. The tract at residues 270 to 298 is disordered; that stretch reads LDLTASTGISDTSYSGSKTRGAAGTQYDD. The segment covering 272–287 has biased composition (polar residues); sequence LTASTGISDTSYSGSK. Residues 280-300 are Extracellular-facing; sequence DTSYSGSKTRGAAGTQYDDSN. Residues 301–311 traverse the membrane as a beta stranded segment; it reads MGQNKVGLSFS. Topologically, residues 312-493 are periplasmic; that stretch reads LPIYQGGMVN…TSNGHNPFRN (182 aa). Composition is skewed to polar residues over residues 446-459 and 475-493; these read STNP…TPEQ and VQQT…PFRN. The interval 446-493 is disordered; the sequence is STNPENVAPQTPEQNAIADGYAPDSPAPVVQQTSARTTTSNGHNPFRN.

The protein belongs to the outer membrane factor (OMF) (TC 1.B.17) family. In terms of assembly, homotrimer. Part of tripartite efflux systems, which are composed of an inner membrane transporter, a periplasmic membrane fusion protein, and an outer membrane component, TolC. The complexes form a large protein conduit and can translocate molecules across both the inner and outer membranes. TolC interacts with the membrane fusion proteins AcrA, EmrA and MacA.

It is found in the cell outer membrane. In vitro, inhibited by hexaamminecobalt(3+). In terms of biological role, outer membrane channel, which is required for the function of several efflux systems such as AcrAB-TolC, AcrEF-TolC, EmrAB-TolC and MacAB-TolC. These systems are involved in export of antibiotics and other toxic compounds from the cell. TolC is also involved in import of colicin E1 into the cells. The protein is Outer membrane protein TolC (tolC) of Escherichia coli (strain K12).